We begin with the raw amino-acid sequence, 334 residues long: UDP-N-acetylglucosamine 4,6-dehydratase (inverting) (334 aa).

Residues 13-16, 37-42, 61-62, A81, K85, and 123-124 contribute to the NADP(+) site; these read TGSF, SRDELK, DV, and LS. K85 is a binding site for substrate. K127 is a catalytic residue. NADP(+) is bound by residues Y135 and K139. N167 provides a ligand contact to substrate. Residue 168–172 coordinates NADP(+); the sequence is VVGSR. Substrate-binding residues include V175, T193, R252, and E255.

Belongs to the polysaccharide synthase family. Homohexamer. NADP(+) serves as cofactor.

The catalysed reaction is UDP-N-acetyl-alpha-D-glucosamine = UDP-2-acetamido-2,6-dideoxy-beta-L-arabino-hex-4-ulose + H2O. Its function is as follows. Catalyzes the first step in the biosynthesis of pseudaminic acid, a sialic-acid-like sugar that is used to modify flagellin. Has both C6 dehydratase and C5 epimerase activities that result in the production of both UDP-2-acetamido-2,6-dideoxy-beta-L-arabino-4-hexulose and UDP-2-acetamido-2,6-dideoxy-alpha-D-xylo-4-hexulose. This is UDP-N-acetylglucosamine 4,6-dehydratase (inverting) (pseB) from Campylobacter jejuni subsp. jejuni serotype O:2 (strain ATCC 700819 / NCTC 11168).